Consider the following 356-residue polypeptide: Peptide chain release factor 1 (356 aa).

An N5-methylglutamine modification is found at Gln-235.

It belongs to the prokaryotic/mitochondrial release factor family. In terms of processing, methylated by PrmC. Methylation increases the termination efficiency of RF1.

It is found in the cytoplasm. Functionally, peptide chain release factor 1 directs the termination of translation in response to the peptide chain termination codons UAG and UAA. The polypeptide is Peptide chain release factor 1 (Mycobacteroides abscessus (strain ATCC 19977 / DSM 44196 / CCUG 20993 / CIP 104536 / JCM 13569 / NCTC 13031 / TMC 1543 / L948) (Mycobacterium abscessus)).